We begin with the raw amino-acid sequence, 235 residues long: Large ribosomal subunit protein uL1 (235 aa).

It belongs to the universal ribosomal protein uL1 family. In terms of assembly, part of the 50S ribosomal subunit.

Binds directly to 23S rRNA. The L1 stalk is quite mobile in the ribosome, and is involved in E site tRNA release. Functionally, protein L1 is also a translational repressor protein, it controls the translation of the L11 operon by binding to its mRNA. The protein is Large ribosomal subunit protein uL1 of Prochlorococcus marinus (strain MIT 9515).